The following is a 60-amino-acid chain: Metallothionein B (60 aa).

The tract at residues 1 to 28 (MDPCECSKTGSCNCGGSCKCSNCACTSC) is beta. A divalent metal cation contacts are provided by C4, C6, C12, C14, C18, C20, C23, C25, C28, C32, C33, C35, C36, C40, C43, C47, C49, C54, C58, and C59. The interval 29–60 (KKSCCPCCPSDCSKCASGCVCKGKTCDTSCCQ) is alpha.

The protein belongs to the metallothionein superfamily. Type 1 family.

In terms of biological role, metallothioneins have a high content of cysteine residues that bind various heavy metals. This is Metallothionein B (mtb) from Oncorhynchus mykiss (Rainbow trout).